The following is a 241-amino-acid chain: 3-dehydroquinate dehydratase (241 aa).

3-dehydroquinate-binding positions include 35–37 (ELR) and R70. H132 (proton donor/acceptor) is an active-site residue. K159 functions as the Schiff-base intermediate with substrate in the catalytic mechanism. Residues R201 and Q224 each contribute to the 3-dehydroquinate site.

The protein belongs to the type-I 3-dehydroquinase family. In terms of assembly, homodimer.

It catalyses the reaction 3-dehydroquinate = 3-dehydroshikimate + H2O. It participates in metabolic intermediate biosynthesis; chorismate biosynthesis; chorismate from D-erythrose 4-phosphate and phosphoenolpyruvate: step 3/7. In terms of biological role, involved in the third step of the chorismate pathway, which leads to the biosynthesis of aromatic amino acids. Catalyzes the cis-dehydration of 3-dehydroquinate (DHQ) and introduces the first double bond of the aromatic ring to yield 3-dehydroshikimate. This is 3-dehydroquinate dehydratase from Staphylococcus carnosus (strain TM300).